We begin with the raw amino-acid sequence, 603 residues long: uncharacterized protein (603 aa).

Residues 1–93 enclose the PE domain; that stretch reads MSFVIAAPET…AGAYASAEAA (93 aa).

The protein belongs to the mycobacterial PE family. PGRS subfamily.

This is an uncharacterized protein from Mycobacterium tuberculosis (strain ATCC 25618 / H37Rv).